A 745-amino-acid polypeptide reads, in one-letter code: VCP-like ATPase (745 aa).

ATP is bound by residues 231–238 (GPPGTGKT) and 508–515 (GPPGVGKT).

It belongs to the AAA ATPase family. CDC48 subfamily. In terms of assembly, homohexamer. Forms a ring-shaped particle.

In Thermoplasma acidophilum (strain ATCC 25905 / DSM 1728 / JCM 9062 / NBRC 15155 / AMRC-C165), this protein is VCP-like ATPase (vat).